An 88-amino-acid chain; its full sequence is UPF0473 protein CLL_A1177 (88 aa).

It belongs to the UPF0473 family.

The chain is UPF0473 protein CLL_A1177 from Clostridium botulinum (strain Eklund 17B / Type B).